Consider the following 212-residue polypeptide: 3,4-dihydroxy-2-butanone 4-phosphate synthase (212 aa).

Residues 37 to 38 (RE), D42, 150 to 154 (RRGHT), and E174 each bind D-ribulose 5-phosphate. E38 serves as a coordination point for Mg(2+). Mg(2+) is bound at residue H153.

It belongs to the DHBP synthase family. As to quaternary structure, homodimer. Mg(2+) is required as a cofactor. Mn(2+) serves as cofactor.

It catalyses the reaction D-ribulose 5-phosphate = (2S)-2-hydroxy-3-oxobutyl phosphate + formate + H(+). It participates in cofactor biosynthesis; riboflavin biosynthesis; 2-hydroxy-3-oxobutyl phosphate from D-ribulose 5-phosphate: step 1/1. Catalyzes the conversion of D-ribulose 5-phosphate to formate and 3,4-dihydroxy-2-butanone 4-phosphate. The sequence is that of 3,4-dihydroxy-2-butanone 4-phosphate synthase from Shewanella piezotolerans (strain WP3 / JCM 13877).